A 120-amino-acid chain; its full sequence is Large ribosomal subunit protein bL19 (120 aa).

Belongs to the bacterial ribosomal protein bL19 family.

Functionally, this protein is located at the 30S-50S ribosomal subunit interface and may play a role in the structure and function of the aminoacyl-tRNA binding site. This chain is Large ribosomal subunit protein bL19, found in Crocosphaera subtropica (strain ATCC 51142 / BH68) (Cyanothece sp. (strain ATCC 51142)).